The following is a 432-amino-acid chain: Adenosylhomocysteinase (432 aa).

N-acetylserine is present on Ser2. The substrate site is built by Thr57, Asp131, and Glu156. Ser183 carries the phosphoserine modification. Positions 183 to 350 are NAD binding; sequence SVTKSKFDNL…EGRLVNLGCA (168 aa). Substrate contacts are provided by Lys186 and Asp190. N6-(2-hydroxyisobutyryl)lysine is present on Lys186. The residue at position 193 (Tyr193) is a Phosphotyrosine.

It belongs to the adenosylhomocysteinase family. As to quaternary structure, homotetramer. Interaction with AHCYL1. Requires NAD(+) as cofactor.

It localises to the cytoplasm. It is found in the melanosome. The protein localises to the nucleus. The protein resides in the endoplasmic reticulum. The catalysed reaction is S-adenosyl-L-homocysteine + H2O = L-homocysteine + adenosine. Its pathway is amino-acid biosynthesis; L-homocysteine biosynthesis; L-homocysteine from S-adenosyl-L-homocysteine: step 1/1. In terms of biological role, catalyzes the hydrolysis of S-adenosyl-L-homocysteine to form adenosine and homocysteine. Binds copper ions. The sequence is that of Adenosylhomocysteinase (AHCY) from Macaca fascicularis (Crab-eating macaque).